The sequence spans 248 residues: Probable transcriptional regulatory protein RHE_CH03475 (248 aa).

Belongs to the TACO1 family.

The protein resides in the cytoplasm. The sequence is that of Probable transcriptional regulatory protein RHE_CH03475 from Rhizobium etli (strain ATCC 51251 / DSM 11541 / JCM 21823 / NBRC 15573 / CFN 42).